A 339-amino-acid chain; its full sequence is MAGRVKIKQKELIDSTVKNKNVMNLFHEIIGSKGNINFSVVWPKFKKIKQSVYDYISTLSVLEKASVMQNFEADKKLLELFVQKLWAAYEGYFKYPEIEKYEVEGQVNFNLVPQCVLEKFSQLYRIRINSELVTLILNSCAFMSKYNDYILKKDPYILTITPGLCFSPIPNFEDLNFKHLYNSDKNSQHDKEFIMFILYKLYTAALGVYNAISIPDIDVEDLENIILSSVSQIKKQIPRCKDAFNKIESSVHLLRKNFNTYYSDYVGSGYNPTIIMEQYIKDISQDSKNISPRISYQFRTIIKYYRDMIATRHQTMDPQVLNLVKHVEKKLDMLDREKN.

The protein belongs to the asfivirus H339R family. In terms of assembly, interacts with NACA (alpha chain of nascent polypeptide-associated complex).

It is found in the host cytoplasm. The protein localises to the host nucleus. Its subcellular location is the virion. The polypeptide is Protein H339R (African swine fever virus (strain Badajoz 1971 Vero-adapted) (Ba71V)).